Reading from the N-terminus, the 115-residue chain is MTRVKRGFIARRRRNKILTFASGFQGSHSKQFRVAKQQKKRALISAERDRMKRKRDFRRLWIARINAAVRFSGLSYSQFVYCMYKNRLSQNRKNLAQIATLCTPFFSTFSQKIMT.

It belongs to the bacterial ribosomal protein bL20 family.

Its subcellular location is the plastid. It localises to the chloroplast. Its function is as follows. Binds directly to 23S ribosomal RNA and is necessary for the in vitro assembly process of the 50S ribosomal subunit. It is not involved in the protein synthesizing functions of that subunit. This Gnetum parvifolium (Small-leaved jointfir) protein is Large ribosomal subunit protein bL20c.